Here is a 456-residue protein sequence, read N- to C-terminus: RuvB-like 1 (456 aa).

A disordered region spans residues 1-20; the sequence is MKIEEVKSTTKTQRIASHSH. 70–77 is a binding site for ATP; that stretch reads GPPGTGKT.

This sequence belongs to the RuvB family. Forms homohexameric rings. Can form a dodecamer with ruvbl2 made of two stacked hexameric rings. Is a component of the RNA polymerase II holoenzyme complex. Component of the chromatin-remodeling Ino80 complex. Component of some MLL1/MLL complex.

The protein localises to the nucleus. The protein resides in the dynein axonemal particle. The catalysed reaction is ATP + H2O = ADP + phosphate + H(+). In terms of biological role, has single-stranded DNA-stimulated ATPase and ATP-dependent DNA helicase (3' to 5') activity suggesting a role in nuclear processes such as recombination and transcription. Proposed core component of the chromatin remodeling Ino80 complex which exhibits DNA- and nucleosome-activated ATPase activity and catalyzes ATP-dependent nucleosome sliding. May act as a negative regulator of embryonic heart growth. The polypeptide is RuvB-like 1 (ruvbl1) (Danio rerio (Zebrafish)).